The primary structure comprises 53 residues: UPF0391 membrane protein Bxeno_A2958 (53 aa).

Transmembrane regions (helical) follow at residues 5–25 and 30–50; these read AIVF…GIAA and IAKI…LLGV.

This sequence belongs to the UPF0391 family.

It localises to the cell membrane. In Paraburkholderia xenovorans (strain LB400), this protein is UPF0391 membrane protein Bxeno_A2958.